Reading from the N-terminus, the 493-residue chain is Sulfoacetaldehyde dehydrogenase (acylating) (493 aa).

Basic residues predominate over residues 1–10; sequence MSVQILHRRQ. The interval 1 to 21 is disordered; the sequence is MSVQILHRRQSNNSDLPLPTA. Cys273 functions as the Nucleophile in the catalytic mechanism.

The protein belongs to the aldehyde dehydrogenase family. In terms of assembly, homodimer.

It is found in the cytoplasm. The catalysed reaction is sulfoacetaldehyde + NADP(+) + CoA = sulfoacetyl-CoA + NADPH + H(+). Functionally, involved in the degradation of sulfoacetate, a widespread natural product. Catalyzes the conversion of sulfoacetyl-CoA and NADPH to sulfoacetaldehyde, CoA and NADP(+). Specific for NADP(+) and sulfoacetaldehyde. The sequence is that of Sulfoacetaldehyde dehydrogenase (acylating) from Cupriavidus necator (strain ATCC 17699 / DSM 428 / KCTC 22496 / NCIMB 10442 / H16 / Stanier 337) (Ralstonia eutropha).